Here is a 313-residue protein sequence, read N- to C-terminus: Protochlorophyllide reductase (313 aa).

It belongs to the short-chain dehydrogenases/reductases (SDR) family. POR subfamily.

The protein localises to the plastid. The protein resides in the chloroplast. The catalysed reaction is chlorophyllide a + NADP(+) = protochlorophyllide a + NADPH + H(+). Its pathway is porphyrin-containing compound metabolism; chlorophyll biosynthesis. Phototransformation of protochlorophyllide (Pchlide) to chlorophyllide (Chlide). The chain is Protochlorophyllide reductase from Avena sativa (Oat).